A 542-amino-acid chain; its full sequence is Berberine bridge enzyme-like 25 (542 aa).

The N-terminal stretch at 1–30 (MGNSKPLPTISCISVFALYFSFYTITLTSS) is a signal peptide. Cysteine 40 and cysteine 104 are joined by a disulfide. N-linked (GlcNAc...) asparagine glycosylation occurs at asparagine 61. Positions 82–258 (TMPKPGFIFK…LSWKIKLVPV (177 aa)) constitute an FAD-binding PCMH-type domain. Histidine 119 carries the pros-8alpha-FAD histidine modification. Asparagine 308 and asparagine 436 each carry an N-linked (GlcNAc...) asparagine glycan.

The protein belongs to the oxygen-dependent FAD-linked oxidoreductase family. Requires FAD as cofactor.

Its subcellular location is the secreted. It is found in the cell wall. This is Berberine bridge enzyme-like 25 from Arabidopsis thaliana (Mouse-ear cress).